Reading from the N-terminus, the 84-residue chain is AIFKSYCEIIVTHFPFDEQNCSMKLGTWTYDGSKVAINAESEHPDLSNFMESGEWVIKEARGWKHWVFYACCPTTPYLDITYHF.

2 disulfides stabilise this stretch: Cys-7-Cys-21 and Cys-71-Cys-72. N-linked (GlcNAc...) asparagine glycosylation is present at Asn-20.

It belongs to the ligand-gated ion channel (TC 1.A.9) family. Acetylcholine receptor (TC 1.A.9.1) subfamily. Alpha-1/CHRNA1 sub-subfamily. In terms of assembly, one of the alpha chains that assemble within the acetylcholine receptor, a pentamer of two alpha chains, a beta, a delta, and a gamma (in immature muscle) or epsilon (in mature muscle) chains. The muscle heteropentamer composed of alpha-1, beta-1, delta, epsilon subunits interacts with the alpha-conotoxin ImII.

It localises to the postsynaptic cell membrane. Its subcellular location is the cell membrane. It carries out the reaction K(+)(in) = K(+)(out). It catalyses the reaction Na(+)(in) = Na(+)(out). Functionally, upon acetylcholine binding, the AChR responds by an extensive change in conformation that affects all subunits and leads to opening of an ion-conducting channel across the plasma membrane. This is Acetylcholine receptor subunit alpha (CHRNA1) from Crocidura russula (Greater white-toothed shrew).